The chain runs to 151 residues: Probable cGMP 3',5'-cyclic phosphodiesterase subunit delta (151 aa).

The protein belongs to the PDE6D/unc-119 family. In terms of assembly, interacts with Pde6.

It localises to the nucleus. Its subcellular location is the cytoplasm. The polypeptide is Probable cGMP 3',5'-cyclic phosphodiesterase subunit delta (Culex quinquefasciatus (Southern house mosquito)).